A 58-amino-acid polypeptide reads, in one-letter code: Large ribosomal subunit protein uL30 (58 aa).

Belongs to the universal ribosomal protein uL30 family. Part of the 50S ribosomal subunit.

This chain is Large ribosomal subunit protein uL30, found in Pseudomonas entomophila (strain L48).